Reading from the N-terminus, the 668-residue chain is DNA ligase (668 aa).

NAD(+) contacts are provided by residues 31–35 (DAEYD), 80–81 (SL), and Glu112. Lys114 serves as the catalytic N6-AMP-lysine intermediate. 4 residues coordinate NAD(+): Arg135, Glu172, Lys289, and Lys313. Zn(2+) is bound by residues Cys407, Cys410, Cys425, and Cys431. The region spanning 591-668 (SVPQPLAGKV…NEEQLIELLN (78 aa)) is the BRCT domain.

Belongs to the NAD-dependent DNA ligase family. LigA subfamily. Mg(2+) is required as a cofactor. The cofactor is Mn(2+).

The enzyme catalyses NAD(+) + (deoxyribonucleotide)n-3'-hydroxyl + 5'-phospho-(deoxyribonucleotide)m = (deoxyribonucleotide)n+m + AMP + beta-nicotinamide D-nucleotide.. Functionally, DNA ligase that catalyzes the formation of phosphodiester linkages between 5'-phosphoryl and 3'-hydroxyl groups in double-stranded DNA using NAD as a coenzyme and as the energy source for the reaction. It is essential for DNA replication and repair of damaged DNA. This chain is DNA ligase, found in Aliivibrio fischeri (strain ATCC 700601 / ES114) (Vibrio fischeri).